A 324-amino-acid polypeptide reads, in one-letter code: MELLPHEKQVVEYEKAIAEFKEKNKKNSLLSSSEIQKLEKRLDKLKEKIYSDLTPWERVQICRHPSRPRTVNYIEGMCEEFVELCGDRTFRDDPAVVGGFVKIQGQRFVLIGQEKGCDTASRLHRNFGMLCPEGFRKALRLGKLAEKFGLPVVFLVDTPGAYPGLTAEERGQGWAIAKNLFELSRLATPVIIVVIGEGCSGGALGMAVGDSVAMLEHSYYSVISPEGCASILWKDPKKNSEAASMLKMHGENLKQFGIIDTVIKEPIGGAHHDPALVYSNVREFIIQEWLRLKDLAIEELLEKRYEKFRSIGLYETTSESGPEA.

Positions K37–R291 constitute a CoA carboxyltransferase C-terminal domain.

It belongs to the AccA family. In terms of assembly, acetyl-CoA carboxylase is a heterohexamer composed of biotin carboxyl carrier protein (AccB), biotin carboxylase (AccC) and two subunits each of ACCase subunit alpha (AccA) and ACCase subunit beta (AccD).

It localises to the cytoplasm. It carries out the reaction N(6)-carboxybiotinyl-L-lysyl-[protein] + acetyl-CoA = N(6)-biotinyl-L-lysyl-[protein] + malonyl-CoA. The protein operates within lipid metabolism; malonyl-CoA biosynthesis; malonyl-CoA from acetyl-CoA: step 1/1. Functionally, component of the acetyl coenzyme A carboxylase (ACC) complex. First, biotin carboxylase catalyzes the carboxylation of biotin on its carrier protein (BCCP) and then the CO(2) group is transferred by the carboxyltransferase to acetyl-CoA to form malonyl-CoA. The sequence is that of Acetyl-coenzyme A carboxylase carboxyl transferase subunit alpha from Chlamydia pneumoniae (Chlamydophila pneumoniae).